The primary structure comprises 77 residues: Large ribosomal subunit protein bL28 (77 aa).

This sequence belongs to the bacterial ribosomal protein bL28 family.

The protein is Large ribosomal subunit protein bL28 of Laribacter hongkongensis (strain HLHK9).